Reading from the N-terminus, the 493-residue chain is Glutathione hydrolase 6 (493 aa).

The Cytoplasmic segment spans residues 1–54 (MERAEEPVVYQKLLPWEPSLESEEEVEEEETSEALVLNPRRHQDSSRNKAGGLP). The disordered stretch occupies residues 19–52 (SLESEEEVEEEETSEALVLNPRRHQDSSRNKAGG). Residues 20–32 (LESEEEVEEEETS) are compositionally biased toward acidic residues. The chain crosses the membrane as a helical; Signal-anchor for type II membrane protein span at residues 55-75 (GTWARVVAALLLLAVGCSLAV). The Extracellular portion of the chain corresponds to 76 to 493 (RQLQNQGRST…PHACCPFQGF (418 aa)). The interval 83–105 (RSTGSLGSVAPPPGGHSHGPGVY) is disordered. N-linked (GlcNAc...) asparagine glycans are attached at residues Asn161 and Asn370. A compositionally biased stretch (low complexity) spans 442–455 (PPTQAQHQHQGQQE). The tract at residues 442-464 (PPTQAQHQHQGQQEPTEHPSTCG) is disordered.

This sequence belongs to the gamma-glutamyltransferase family. In terms of assembly, heterodimer composed of the light and heavy chains. The active site is located in the light chain. Post-translationally, cleaved by autocatalysis into a large and a small subunit and the autocatalytic cleavage is essential to the functional activation of the enzyme.

The protein resides in the membrane. The catalysed reaction is an N-terminal (5-L-glutamyl)-[peptide] + an alpha-amino acid = 5-L-glutamyl amino acid + an N-terminal L-alpha-aminoacyl-[peptide]. It catalyses the reaction glutathione + H2O = L-cysteinylglycine + L-glutamate. It carries out the reaction an S-substituted glutathione + H2O = an S-substituted L-cysteinylglycine + L-glutamate. It functions in the pathway sulfur metabolism; glutathione metabolism. In terms of biological role, hydrolyzes and transfers gamma-glutamyl moieties from glutathione and other gamma-glutamyl compounds to acceptors. In Homo sapiens (Human), this protein is Glutathione hydrolase 6.